A 686-amino-acid chain; its full sequence is ATP-dependent zinc metalloprotease FTSH 1, chloroplastic (686 aa).

Residues 1-16 (MAPPCSISSASHLLIT) constitute a chloroplast transit peptide. A helical transmembrane segment spans residues 173 to 193 (FLAFVGNLLFPFLAFAGLFFL). 272–279 (GPPGTGKT) contributes to the ATP binding site. Residue H494 participates in Zn(2+) binding. E495 is an active-site residue. H498 and D575 together coordinate Zn(2+).

This sequence in the N-terminal section; belongs to the AAA ATPase family. In the C-terminal section; belongs to the peptidase M41 family. The cofactor is Zn(2+).

It is found in the plastid. The protein resides in the chloroplast thylakoid membrane. Functionally, probable ATP-dependent zinc metallopeptidase. The chain is ATP-dependent zinc metalloprotease FTSH 1, chloroplastic (FTSH1) from Oryza sativa subsp. japonica (Rice).